A 284-amino-acid chain; its full sequence is NADH-cytochrome b5 reductase 1 (284 aa).

A helical transmembrane segment spans residues 8 to 28 (PLVIFSTLAAIILAAVAVYVV). The 104-residue stretch at 41–144 (DVFQKFPLIE…RGPKGFFTYT (104 aa)) folds into the FAD-binding FR-type domain. FAD is bound by residues 124 to 139 (DSKSVGDHIEVRGPKG) and 150 to 182 (HLGMIAGGTGIAPMYQVLTAILTNPDDKTKISL).

The protein belongs to the flavoprotein pyridine nucleotide cytochrome reductase family. Monomer. Component of the 2-(3-amino-3-carboxypropyl)histidine synthase complex composed of DPH1, DPH2, DPH3 and a NADH-dependent reductase, predominantly CBR1. Requires FAD as cofactor.

It is found in the mitochondrion outer membrane. It catalyses the reaction 2 Fe(III)-[cytochrome b5] + NADH = 2 Fe(II)-[cytochrome b5] + NAD(+) + H(+). It carries out the reaction 2 Fe(3+)-[Dph3] + NADH = 2 Fe(2+)-[Dph3] + NAD(+) + H(+). The protein operates within protein modification; peptidyl-diphthamide biosynthesis. Functionally, NADH-dependent reductase for DPH3 and cytochrome b5. Required for the first step of diphthamide biosynthesis, a post-translational modification of histidine which occurs in elongation factor 2. DPH1 and DPH2 transfer a 3-amino-3-carboxypropyl (ACP) group from S-adenosyl-L-methionine (SAM) to a histidine residue, the reaction is assisted by a reduction system comprising DPH3 and a NADH-dependent reductase, predominantly CBR1. By reducing DPH3, also involved in the formation of the tRNA wobble base modification mcm5s 2U (5-methoxycarbonylmethyl-2-thiouridine), mediated by the elongator complex. The cytochrome b5/NADH cytochrome b5 reductase electron transfer system supports the catalytic activity of several sterol biosynthetic enzymes. This chain is NADH-cytochrome b5 reductase 1 (CBR1), found in Meyerozyma guilliermondii (strain ATCC 6260 / CBS 566 / DSM 6381 / JCM 1539 / NBRC 10279 / NRRL Y-324) (Yeast).